Consider the following 417-residue polypeptide: D-amino acid dehydrogenase (417 aa).

3 to 17 (VVILGSGVVGVSTAW) lines the FAD pocket.

It belongs to the DadA oxidoreductase family. FAD is required as a cofactor.

It carries out the reaction a D-alpha-amino acid + A + H2O = a 2-oxocarboxylate + AH2 + NH4(+). It functions in the pathway amino-acid degradation; D-alanine degradation; NH(3) and pyruvate from D-alanine: step 1/1. Functionally, oxidative deamination of D-amino acids. In Pectobacterium carotovorum subsp. carotovorum (strain PC1), this protein is D-amino acid dehydrogenase.